The primary structure comprises 259 residues: Steroidogenic acute regulatory-like protein 1 (259 aa).

The first 20 residues, 1 to 20, serve as a signal peptide directing secretion; the sequence is MTLLPFTCLILLYSLGSVMS. One can recognise an START domain in the interval 43–254; sequence YATALKTCGE…NRRHFQNLKA (212 aa).

In Caenorhabditis elegans, this protein is Steroidogenic acute regulatory-like protein 1 (strl-1).